The sequence spans 357 residues: MAAPAKGENLSLVVHGPGDIRLENYPIPELGPNDVLLKMHSVGICGSDVHYWEHGRIGDFVVKKPMVLGHEAAGTVTKVGELVKHLKPGDRVAIEPGVPREVDEYCKIGRYNLTPTIFFCATPPDDGNLCRFYKHNADFCYKLPDSVTFEEGALIEPLSVGIYACRRGSVSLGNKVLVCGAGPVGMVTLLVAKAMGAAQVVVTDLSASRLTKAKEVGADFTIQVGKETPQEIASKVESLLGSKPEVTIECTGAESSVQTGIYATHSGGTLVIVGMGAEMVNLPLVHAAIREVDIKGVFRYCNTWPMAISMLASKTLNVKPLVTHRFPLEKAVEAFETAKKGVGLKVMIKCDPNDQNP.

Alanine 2 is modified (N-acetylalanine). Cysteine 45 serves as a coordination point for Zn(2+). Residue tyrosine 51 coordinates substrate. Histidine 70 and glutamate 71 together coordinate Zn(2+). Glutamate 156 provides a ligand contact to substrate. Position 169 is a phosphoserine (serine 169). Residues valine 184, aspartate 204, arginine 209, 273 to 275 (VGM), and 297 to 299 (VFR) contribute to the NAD(+) site. Arginine 299 and tyrosine 300 together coordinate substrate.

It belongs to the zinc-containing alcohol dehydrogenase family. In terms of assembly, homotetramer. It depends on Zn(2+) as a cofactor. In terms of tissue distribution, testis has the highest level of expression, followed by kidney, liver, and lung. Low levels of expression are also observed in lens, brain, and skeletal muscle. Expressed in sperm flagellum and very low expression in the sperm head.

It localises to the mitochondrion membrane. It is found in the cell projection. The protein localises to the cilium. Its subcellular location is the flagellum. The enzyme catalyses keto-D-fructose + NADH + H(+) = D-sorbitol + NAD(+). The catalysed reaction is xylitol + NAD(+) = D-xylulose + NADH + H(+). It carries out the reaction L-iditol + NAD(+) = keto-L-sorbose + NADH + H(+). Its activity is regulated as follows. Inhibited in vitro by p-hydroxymercuribenzoate, EDTA, l,l0-phenanthroline and N-ethylmaleimide. Its function is as follows. Polyol dehydrogenase that catalyzes the reversible NAD(+)-dependent oxidation of various sugar alcohols. Is active with D-sorbitol (D-glucitol) leading to the C2-oxidized product D-fructose. Is a key enzyme in the polyol pathway that interconverts glucose and fructose via sorbitol, which constitutes an important alternate route for glucose metabolism. May play a role in sperm motility by using sorbitol as an alternative energy source for sperm motility and protein tyrosine phosphorylation. Has no activity on ethanol. Cannot use NADP(+) as the electron acceptor. The polypeptide is Sorbitol dehydrogenase (Sord) (Mus musculus (Mouse)).